A 128-amino-acid chain; its full sequence is uncharacterized protein (128 aa).

The next 2 membrane-spanning stretches (helical) occupy residues 33–53 (LLYI…VCYV) and 61–81 (FFCW…VIIY). A compositionally biased stretch (polar residues) spans 99 to 120 (DSLNQNVGESQSNEPPKYTSTF). Positions 99 to 128 (DSLNQNVGESQSNEPPKYTSTFMDELDKQD) are disordered.

Its subcellular location is the membrane. This is an uncharacterized protein from Schizosaccharomyces pombe (strain 972 / ATCC 24843) (Fission yeast).